The sequence spans 194 residues: Large ribosomal subunit protein bL25B (194 aa).

Belongs to the bacterial ribosomal protein bL25 family. CTC subfamily. In terms of assembly, part of the 50S ribosomal subunit; part of the 5S rRNA/L5/L18/L25 subcomplex. Contacts the 5S rRNA. Binds to the 5S rRNA independently of L5 and L18.

This is one of the proteins that binds to the 5S RNA in the ribosome where it forms part of the central protuberance. This Symbiobacterium thermophilum (strain DSM 24528 / JCM 14929 / IAM 14863 / T) protein is Large ribosomal subunit protein bL25B.